We begin with the raw amino-acid sequence, 783 residues long: LPS-assembly protein LptD (783 aa).

The first 24 residues, 1 to 24 (MSCFSRTFLAASISAALFAPQIQA), serve as a signal peptide directing secretion.

It belongs to the LptD family. In terms of assembly, component of the lipopolysaccharide transport and assembly complex. Interacts with LptE and LptA.

The protein localises to the cell outer membrane. Its function is as follows. Together with LptE, is involved in the assembly of lipopolysaccharide (LPS) at the surface of the outer membrane. This Vibrio cholerae serotype O1 (strain ATCC 39315 / El Tor Inaba N16961) protein is LPS-assembly protein LptD.